Consider the following 232-residue polypeptide: Ubiquinone biosynthesis O-methyltransferase (232 aa).

S-adenosyl-L-methionine contacts are provided by R36, G55, D76, and L120.

The protein belongs to the methyltransferase superfamily. UbiG/COQ3 family.

It carries out the reaction a 3-demethylubiquinol + S-adenosyl-L-methionine = a ubiquinol + S-adenosyl-L-homocysteine + H(+). It catalyses the reaction a 3-(all-trans-polyprenyl)benzene-1,2-diol + S-adenosyl-L-methionine = a 2-methoxy-6-(all-trans-polyprenyl)phenol + S-adenosyl-L-homocysteine + H(+). It functions in the pathway cofactor biosynthesis; ubiquinone biosynthesis. Its function is as follows. O-methyltransferase that catalyzes the 2 O-methylation steps in the ubiquinone biosynthetic pathway. The sequence is that of Ubiquinone biosynthesis O-methyltransferase from Pseudomonas aeruginosa (strain LESB58).